The following is a 398-amino-acid chain: cAMP-dependent protein kinase, catalytic subunit-like (398 aa).

A Protein kinase domain is found at 90–344 (LERIITIGKG…TQDVKDHKWF (255 aa)). Residues 96 to 104 (IGKGTFGRV) and lysine 119 each bind ATP. Catalysis depends on aspartate 213, which acts as the Proton acceptor. In terms of domain architecture, AGC-kinase C-terminal spans 345 to 398 (EKVNWDDTLHLRVEPPIVPTLYHPGDTGNFDDYEEDTTGGPLCSQRDRDLFAEW).

Belongs to the protein kinase superfamily. Ser/Thr protein kinase family. cAMP subfamily.

It catalyses the reaction L-seryl-[protein] + ATP = O-phospho-L-seryl-[protein] + ADP + H(+). The catalysed reaction is L-threonyl-[protein] + ATP = O-phospho-L-threonyl-[protein] + ADP + H(+). The polypeptide is cAMP-dependent protein kinase, catalytic subunit-like (Caenorhabditis elegans).